Here is a 692-residue protein sequence, read N- to C-terminus: Elongation factor G (692 aa).

The tr-type G domain occupies 9-283; sequence DKLRNIGIMA…AVIDYLPSPL (275 aa). GTP-binding positions include 18–25, 82–86, and 136–139; these read AHIDAGKT, DTPGH, and NKMD.

The protein belongs to the TRAFAC class translation factor GTPase superfamily. Classic translation factor GTPase family. EF-G/EF-2 subfamily.

Its subcellular location is the cytoplasm. Functionally, catalyzes the GTP-dependent ribosomal translocation step during translation elongation. During this step, the ribosome changes from the pre-translocational (PRE) to the post-translocational (POST) state as the newly formed A-site-bound peptidyl-tRNA and P-site-bound deacylated tRNA move to the P and E sites, respectively. Catalyzes the coordinated movement of the two tRNA molecules, the mRNA and conformational changes in the ribosome. In Thermotoga maritima (strain ATCC 43589 / DSM 3109 / JCM 10099 / NBRC 100826 / MSB8), this protein is Elongation factor G (fusA).